A 763-amino-acid polypeptide reads, in one-letter code: Phosphoglycerol transferase I (763 aa).

Transmembrane regions (helical) follow at residues 1–21 (MSEL…AWKA), 26–46 (WWFA…ITLF), 77–97 (ILPG…LGWI), and 108–128 (FGYS…SPAF).

The protein belongs to the OpgB family.

The protein localises to the cell inner membrane. It carries out the reaction a phosphatidylglycerol + a membrane-derived-oligosaccharide D-glucose = a 1,2-diacyl-sn-glycerol + a membrane-derived-oligosaccharide 6-(glycerophospho)-D-glucose.. It participates in glycan metabolism; osmoregulated periplasmic glucan (OPG) biosynthesis. Functionally, transfers a phosphoglycerol residue from phosphatidylglycerol to the membrane-bound nascent glucan backbones. This chain is Phosphoglycerol transferase I, found in Escherichia coli O17:K52:H18 (strain UMN026 / ExPEC).